The primary structure comprises 361 residues: Phospho-N-acetylmuramoyl-pentapeptide-transferase (361 aa).

10 consecutive transmembrane segments (helical) span residues 27–47 (GALFTAGLFVFWFGPWIISLL), 72–92 (TPTMGGLMILAGAVVAILLWA), 99–119 (VWVTLTVTLGFGAIGFYDDYL), 135–155 (LALEAVIAMAACVTIAVYSPA), 169–189 (ALLNLGWFYPLFGAFVIVGAG), 200–220 (GLAIVPVMIACGTFGFIAYLV), 240–260 (LAVVCGAVIGAGLGFLWFNAP), 264–284 (IFMGDTGSLALGGLLGSIAVA), 289–309 (IVLAIVGGLFVLEMMSVIIQV), and 338–358 (QVVIRFWIIAVILAMAGLATL).

Belongs to the glycosyltransferase 4 family. MraY subfamily. Mg(2+) serves as cofactor.

Its subcellular location is the cell inner membrane. It catalyses the reaction UDP-N-acetyl-alpha-D-muramoyl-L-alanyl-gamma-D-glutamyl-meso-2,6-diaminopimeloyl-D-alanyl-D-alanine + di-trans,octa-cis-undecaprenyl phosphate = di-trans,octa-cis-undecaprenyl diphospho-N-acetyl-alpha-D-muramoyl-L-alanyl-D-glutamyl-meso-2,6-diaminopimeloyl-D-alanyl-D-alanine + UMP. Its pathway is cell wall biogenesis; peptidoglycan biosynthesis. Its function is as follows. Catalyzes the initial step of the lipid cycle reactions in the biosynthesis of the cell wall peptidoglycan: transfers peptidoglycan precursor phospho-MurNAc-pentapeptide from UDP-MurNAc-pentapeptide onto the lipid carrier undecaprenyl phosphate, yielding undecaprenyl-pyrophosphoryl-MurNAc-pentapeptide, known as lipid I. This chain is Phospho-N-acetylmuramoyl-pentapeptide-transferase, found in Methylobacterium radiotolerans (strain ATCC 27329 / DSM 1819 / JCM 2831 / NBRC 15690 / NCIMB 10815 / 0-1).